A 257-amino-acid polypeptide reads, in one-letter code: Phosphonates import ATP-binding protein PhnC (257 aa).

The ABC transporter domain maps to isoleucine 2–valine 246. Glycine 35–serine 42 is an ATP binding site.

It belongs to the ABC transporter superfamily. Phosphonates importer (TC 3.A.1.9.1) family. In terms of assembly, the complex is composed of two ATP-binding proteins (PhnC), two transmembrane proteins (PhnE) and a solute-binding protein (PhnD).

Its subcellular location is the cell membrane. It catalyses the reaction phosphonate(out) + ATP + H2O = phosphonate(in) + ADP + phosphate + H(+). In terms of biological role, part of the ABC transporter complex PhnCDE involved in phosphonates import. Responsible for energy coupling to the transport system. This Bacillus anthracis protein is Phosphonates import ATP-binding protein PhnC.